A 693-amino-acid chain; its full sequence is Glycine--tRNA ligase beta subunit (693 aa).

Belongs to the class-II aminoacyl-tRNA synthetase family. In terms of assembly, tetramer of two alpha and two beta subunits.

It is found in the cytoplasm. The enzyme catalyses tRNA(Gly) + glycine + ATP = glycyl-tRNA(Gly) + AMP + diphosphate. The protein is Glycine--tRNA ligase beta subunit of Vibrio campbellii (strain ATCC BAA-1116).